A 398-amino-acid polypeptide reads, in one-letter code: Histidinol-phosphate aminotransferase (398 aa).

A compositionally biased stretch (polar residues) spans 1–10 (MTGQRATPQP). Positions 1 to 30 (MTGQRATPQPTLDDLPLRDDLRGKSPYGAP) are disordered. At K234 the chain carries N6-(pyridoxal phosphate)lysine.

The protein belongs to the class-II pyridoxal-phosphate-dependent aminotransferase family. Histidinol-phosphate aminotransferase subfamily. In terms of assembly, homodimer. Requires pyridoxal 5'-phosphate as cofactor.

It catalyses the reaction L-histidinol phosphate + 2-oxoglutarate = 3-(imidazol-4-yl)-2-oxopropyl phosphate + L-glutamate. It participates in amino-acid biosynthesis; L-histidine biosynthesis; L-histidine from 5-phospho-alpha-D-ribose 1-diphosphate: step 7/9. This Mycolicibacterium paratuberculosis (strain ATCC BAA-968 / K-10) (Mycobacterium paratuberculosis) protein is Histidinol-phosphate aminotransferase.